The primary structure comprises 418 residues: NADH-quinone oxidoreductase subunit D (418 aa).

Belongs to the complex I 49 kDa subunit family. NDH-1 is composed of 14 different subunits. Subunits NuoB, C, D, E, F, and G constitute the peripheral sector of the complex.

The protein localises to the cell inner membrane. The catalysed reaction is a quinone + NADH + 5 H(+)(in) = a quinol + NAD(+) + 4 H(+)(out). NDH-1 shuttles electrons from NADH, via FMN and iron-sulfur (Fe-S) centers, to quinones in the respiratory chain. The immediate electron acceptor for the enzyme in this species is believed to be ubiquinone. Couples the redox reaction to proton translocation (for every two electrons transferred, four hydrogen ions are translocated across the cytoplasmic membrane), and thus conserves the redox energy in a proton gradient. In Bordetella pertussis (strain Tohama I / ATCC BAA-589 / NCTC 13251), this protein is NADH-quinone oxidoreductase subunit D.